A 157-amino-acid chain; its full sequence is Arginine repressor (157 aa).

The protein belongs to the ArgR family.

It is found in the cytoplasm. Its pathway is amino-acid biosynthesis; L-arginine biosynthesis [regulation]. In terms of biological role, regulates arginine biosynthesis genes. This is Arginine repressor from Colwellia psychrerythraea (strain 34H / ATCC BAA-681) (Vibrio psychroerythus).